Here is a 193-residue protein sequence, read N- to C-terminus: Peptidyl-tRNA hydrolase (193 aa).

A tRNA-binding site is contributed by Tyr14. The active-site Proton acceptor is the His19. 3 residues coordinate tRNA: Phe64, Asn66, and Asn112.

The protein belongs to the PTH family. In terms of assembly, monomer.

The protein resides in the cytoplasm. It catalyses the reaction an N-acyl-L-alpha-aminoacyl-tRNA + H2O = an N-acyl-L-amino acid + a tRNA + H(+). Functionally, hydrolyzes ribosome-free peptidyl-tRNAs (with 1 or more amino acids incorporated), which drop off the ribosome during protein synthesis, or as a result of ribosome stalling. Catalyzes the release of premature peptidyl moieties from peptidyl-tRNA molecules trapped in stalled 50S ribosomal subunits, and thus maintains levels of free tRNAs and 50S ribosomes. This chain is Peptidyl-tRNA hydrolase, found in Bartonella bacilliformis (strain ATCC 35685 / KC583 / Herrer 020/F12,63).